We begin with the raw amino-acid sequence, 627 residues long: Nuclear receptor subfamily 4 group A member 3 (627 aa).

The tract at residues 1–112 is activation function (AF)-1 domain; sequence MPCVQAQYSP…HHHHHHHHHQ (112 aa). The tract at residues 1–139 is required for DNA-PK heterotrimer; sequence MPCVQAQYSP…PSTSMYFKQS (139 aa). Positions 1-292 are interaction with NCOA1, NCOA2, NCOA3 and KAT2B; sequence MPCVQAQYSP…NRSSSSGEGT (292 aa). 2 disordered regions span residues 96–162 and 268–289; these read HGYH…DELP and ASSLLGESPSLPSPPNRSSSSG. Residues 97-112 are compositionally biased toward basic residues; it reads GYHHHHHHHHHHHHHQ. Over residues 141 to 150 the composition is skewed to pro residues; the sequence is PSTPTTPGFP. A compositionally biased stretch (low complexity) spans 269–288; that stretch reads SSLLGESPSLPSPPNRSSSS. Positions 290-365 form a DNA-binding region, nuclear receptor; that stretch reads EGTCAVCGDN…VGMVKEVVRT (76 aa). 2 NR C4-type zinc fingers span residues 293–313 and 329–353; these read CAVCGDNAACQHYGVRTCEGC and CLANKNCPVDKRRRNRCQYCRFQKC. A disordered region spans residues 365 to 395; it reads TDSLKGRRGRLPSKPKSPLQQEPSQPSPPSP. A compositionally biased stretch (low complexity) spans 378 to 388; it reads KPKSPLQQEPS. An interaction with KAT2B region spans residues 380–627; it reads KSPLQQEPSQ…DKLFLDTLPF (248 aa). In terms of domain architecture, NR LBD spans 395-624; the sequence is PPICMMNALV…SVIDKLFLDT (230 aa).

This sequence belongs to the nuclear hormone receptor family. NR4 subfamily. Interacts with SIX3 (via homeobox); differentially regulates the transcriptional activities of NR4A3. Interacts with NCOA2; potentiates the activity of the NR4A3. Interacts with NCOA1, NCOA3, MED1 and KAT2B. Interacts with EP300 and NCOA2; mediates the recruitment of MED1 in the coactivator complex. Interacts with the constituents of DNA-PK heterotrimer PRKDC, XRCC6 and XRCC5; phosphorylates and prevents NR4A3 ubiquitinylation and degradation. Interacts with NR3C1 (via nuclear receptor DNA-binding domain); the interactions represses transcription activity of NR4A3 on the POMC promoter Nur response element (NurRE). Interacts with TRIM28; the interactions potentiates NR4A3 activity on NurRE promoter. Binds DNA as a monomer and homodimer. Interacts with PARP1; activates PARP1 by improving acetylation of PARP1 and suppressing the interaction between PARP1 and SIRT1. Phosphorylated by PRKDC. Ubiquitous. Highest levels of expression in brain. Widely expressed throughout the arcuate nucleus region of the hypothalamus, namely in AgRP neurons.

Its subcellular location is the nucleus. Functionally, transcriptional activator that binds to regulatory elements in promoter regions in a cell- and response element (target)-specific manner. Induces gene expression by binding as monomers to the NR4A1 response element (NBRE) 5'-AAAAGGTCA-3' site and as homodimers to the Nur response element (NurRE) site in the promoter of their regulated target genes. Plays a role in the regulation of proliferation, survival and differentiation of many different cell types and also in metabolism and inflammation. Mediates proliferation of vascular smooth muscle, myeloid progenitor cell and type B pancreatic cells; promotes mitogen-induced vascular smooth muscle cell proliferation through transactivation of SKP2 promoter by binding a NBRE site. Upon PDGF stimulation, stimulates vascular smooth muscle cell proliferation by regulating CCND1 and CCND2 expression. In islets, induces type B pancreatic cell proliferation through up-regulation of genes that activate cell cycle, as well as genes that cause degradation of the CDKN1A. Negatively regulates myeloid progenitor cell proliferation by repressing RUNX1 in a NBRE site-independent manner. During inner ear, plays a role as a key mediator of the proliferative growth phase of semicircular canal development. Also mediates survival of neuron and smooth muscle cells; mediates CREB-induced neuronal survival, and during hippocampus development, plays a critical role in pyramidal cell survival and axonal guidance. Is required for S phase entry of the cell cycle and survival of smooth muscle cells by inducing CCND1, resulting in RB1 phosphorylation. Binds to NBRE motif in CCND1 promoter, resulting in the activation of the promoter and CCND1 transcription. Also plays a role in inflammation; upon TNF stimulation, mediates monocyte adhesion by inducing the expression of VCAM1 and ICAM1 by binding to the NBRE consensus site. In mast cells activated by Fc-epsilon receptor cross-linking, promotes the synthesis and release of cytokines but impairs events leading to degranulation. Also plays a role in metabolism; by modulating feeding behavior; and by playing a role in energy balance by inhibiting the glucocorticoid-induced orexigenic neuropeptides AGRP expression, at least in part by forming a complex with activated NR3C1 on the AGRP- glucocorticoid response element (GRE), and thus weakening the DNA binding activity of NR3C1. Upon catecholamines stimulation, regulates gene expression that controls oxidative metabolism in skeletal muscle. Plays a role in glucose transport by regulating translocation of the SLC2A4 glucose transporter to the cell surface. Finally, during gastrulation plays a crucial role in the formation of anterior mesoderm by controlling cell migration. Inhibits adipogenesis. Also participates in cardiac hypertrophy by activating PARP1. In Mus musculus (Mouse), this protein is Nuclear receptor subfamily 4 group A member 3 (Nr4a3).